The chain runs to 215 residues: Endonuclease III (215 aa).

A HhH domain is found at 113–132 (REDLESLPGVGRKTANVILN). [4Fe-4S] cluster contacts are provided by cysteine 192, cysteine 199, cysteine 202, and cysteine 208.

This sequence belongs to the Nth/MutY family. The cofactor is [4Fe-4S] cluster.

It catalyses the reaction 2'-deoxyribonucleotide-(2'-deoxyribose 5'-phosphate)-2'-deoxyribonucleotide-DNA = a 3'-end 2'-deoxyribonucleotide-(2,3-dehydro-2,3-deoxyribose 5'-phosphate)-DNA + a 5'-end 5'-phospho-2'-deoxyribonucleoside-DNA + H(+). In terms of biological role, DNA repair enzyme that has both DNA N-glycosylase activity and AP-lyase activity. The DNA N-glycosylase activity releases various damaged pyrimidines from DNA by cleaving the N-glycosidic bond, leaving an AP (apurinic/apyrimidinic) site. The AP-lyase activity cleaves the phosphodiester bond 3' to the AP site by a beta-elimination, leaving a 3'-terminal unsaturated sugar and a product with a terminal 5'-phosphate. This Buchnera aphidicola subsp. Baizongia pistaciae (strain Bp) protein is Endonuclease III.